The primary structure comprises 54 residues: U-myrmicitoxin(01)-Tb5a (54 aa).

The first 26 residues, 1 to 26 (MQLSHLLLAFAMIFVMTIMYAPQVQA), serve as a signal peptide directing secretion. The propeptide occupies 27–38 (DAWADANADADV).

Belongs to the formicidae venom precursor-01 superfamily. In terms of processing, contains 1 disulfide bond. As to expression, expressed by the venom gland.

It localises to the secreted. This is U-myrmicitoxin(01)-Tb5a from Tetramorium bicarinatum (Tramp ant).